Reading from the N-terminus, the 99-residue chain is RNA-binding protein Hfq (99 aa).

A Sm domain is found at 9–68 (DPYLNALRRERIPVSIYLVNGIKLQGQIESFDQFVILLKNTVNQMVYKHAISTVVPARSV). Positions 67 to 99 (SVSHHNNNAQQQYQQQAAQAASAQSNETSSQAE) are disordered. Residues 72–99 (NNNAQQQYQQQAAQAASAQSNETSSQAE) are compositionally biased toward low complexity.

Belongs to the Hfq family. As to quaternary structure, homohexamer.

Its function is as follows. RNA chaperone that binds small regulatory RNA (sRNAs) and mRNAs to facilitate mRNA translational regulation in response to envelope stress, environmental stress and changes in metabolite concentrations. Also binds with high specificity to tRNAs. This is RNA-binding protein Hfq from Actinobacillus succinogenes (strain ATCC 55618 / DSM 22257 / CCUG 43843 / 130Z).